Here is a 442-residue protein sequence, read N- to C-terminus: Dihydrolipoyllysine-residue acetyltransferase component of pyruvate dehydrogenase complex (442 aa).

The Lipoyl-binding domain occupies Ala2–Asp77. Residue Lys43 is modified to N6-lipoyllysine. Basic and acidic residues predominate over residues Leu84–Thr97. The disordered stretch occupies residues Leu84–Pro136. Residues Ile141–Val178 enclose the Peripheral subunit-binding (PSBD) domain. The span at Ala182 to Gly208 shows a compositional bias: low complexity. The interval Ala182 to Glu215 is disordered. Residue His413 is part of the active site.

This sequence belongs to the 2-oxoacid dehydrogenase family. In terms of assembly, forms a 24-polypeptide structural core with octahedral symmetry. It depends on (R)-lipoate as a cofactor.

It catalyses the reaction N(6)-[(R)-dihydrolipoyl]-L-lysyl-[protein] + acetyl-CoA = N(6)-[(R)-S(8)-acetyldihydrolipoyl]-L-lysyl-[protein] + CoA. Functionally, the pyruvate dehydrogenase complex catalyzes the overall conversion of pyruvate to acetyl-CoA and CO(2). It contains multiple copies of three enzymatic components: pyruvate dehydrogenase (E1), dihydrolipoamide acetyltransferase (E2) and lipoamide dehydrogenase (E3). Its function is as follows. The B.subtilis PDH complex also possesses branched-chain 2-oxoacid dehydrogenase (BCDH) activity. This Bacillus subtilis (strain 168) protein is Dihydrolipoyllysine-residue acetyltransferase component of pyruvate dehydrogenase complex (pdhC).